Consider the following 470-residue polypeptide: Nuclear receptor ROR-beta (470 aa).

The nuclear receptor DNA-binding region spans Val18–Phe93. NR C4-type zinc fingers lie at residues Cys21–Cys41 and Cys57–Cys81. The span at Leu104–Glu117 shows a compositional bias: basic and acidic residues. A disordered region spans residues Leu104–Glu127. In terms of domain architecture, NR LBD spans Glu222 to Leu460. An AF-2 motif is present at residues Leu456–Phe461.

This sequence belongs to the nuclear hormone receptor family. NR1 subfamily. As to quaternary structure, monomer. Interacts with CRX. As to expression, expressed in inner and outer neuroblastic layer as well as in the ganglion cell layer of the developing retina. Expressed in bone marrow osteoprogenitor cells.

The protein resides in the nucleus. It is found in the nucleoplasm. Functionally, nuclear receptor that binds DNA as a monomer to ROR response elements (RORE) containing a single core motif half-site 5'-AGGTCA-3' preceded by a short A-T-rich sequence. Considered to have intrinsic transcriptional activity, have some natural ligands such as all-trans retinoic acid (ATRA) and other retinoids which act as inverse agonists repressing the transcriptional activity. Required for normal postnatal development of rod and cone photoreceptor cells. Modulates rod photoreceptors differentiation at least by inducing the transcription factor NRL-mediated pathway. In cone photoreceptor cells, regulates transcription of OPN1SW. Involved in the regulation of the period length and stability of the circadian rhythm. May control cytoarchitectural patterning of neocortical neurons during development. May act in a dose-dependent manner to regulate barrel formation upon innervation of layer IV neurons by thalamocortical axons. May play a role in the suppression of osteoblastic differentiation through the inhibition of RUNX2 transcriptional activity. Isoform 1 is critical for hindlimb motor control and for the differentiation of amacrine and horizontal cells in the retina. Regulates the expression of PTF1A synergistically with FOXN4. The protein is Nuclear receptor ROR-beta (Rorb) of Mus musculus (Mouse).